A 248-amino-acid polypeptide reads, in one-letter code: Pyridoxine 5'-phosphate synthase (248 aa).

Position 7 (N7) interacts with 3-amino-2-oxopropyl phosphate. 9–10 (DH) is a 1-deoxy-D-xylulose 5-phosphate binding site. 3-amino-2-oxopropyl phosphate is bound at residue R18. H52 acts as the Proton acceptor in catalysis. Residues R54 and H59 each contribute to the 1-deoxy-D-xylulose 5-phosphate site. Catalysis depends on E79, which acts as the Proton acceptor. T109 is a 1-deoxy-D-xylulose 5-phosphate binding site. Residue H201 is the Proton donor of the active site. 3-amino-2-oxopropyl phosphate is bound by residues G202 and 223–224 (GH).

The protein belongs to the PNP synthase family. Homooctamer; tetramer of dimers.

Its subcellular location is the cytoplasm. It catalyses the reaction 3-amino-2-oxopropyl phosphate + 1-deoxy-D-xylulose 5-phosphate = pyridoxine 5'-phosphate + phosphate + 2 H2O + H(+). Its pathway is cofactor biosynthesis; pyridoxine 5'-phosphate biosynthesis; pyridoxine 5'-phosphate from D-erythrose 4-phosphate: step 5/5. Catalyzes the complicated ring closure reaction between the two acyclic compounds 1-deoxy-D-xylulose-5-phosphate (DXP) and 3-amino-2-oxopropyl phosphate (1-amino-acetone-3-phosphate or AAP) to form pyridoxine 5'-phosphate (PNP) and inorganic phosphate. This chain is Pyridoxine 5'-phosphate synthase, found in Opitutus terrae (strain DSM 11246 / JCM 15787 / PB90-1).